Here is a 233-residue protein sequence, read N- to C-terminus: MPARRQWFGDRRVLKRIVLAVLALVILPYALIFFYVLPFIHPVSTLMLRDLVLLRGYDRRWVSLDEIAPVLVQSVMMSEDGQYCFHGGVDWAEMRMLVEDTLKGQATRGGSTIPMQTAKNLFLWNSRSFVRKAMELPLAVSTDFVLSKRRLMEIYLNIAEWGPGIYGIEAAAQHHFKVPASKLTRRQASLLAVSLPNPIDRNAGKPGRGLRRLAGVIERRAQGSGDYIKCIYE.

A helical transmembrane segment spans residues Ile17–Leu37.

This sequence belongs to the glycosyltransferase 51 family.

The protein resides in the cell inner membrane. It catalyses the reaction [GlcNAc-(1-&gt;4)-Mur2Ac(oyl-L-Ala-gamma-D-Glu-L-Lys-D-Ala-D-Ala)](n)-di-trans,octa-cis-undecaprenyl diphosphate + beta-D-GlcNAc-(1-&gt;4)-Mur2Ac(oyl-L-Ala-gamma-D-Glu-L-Lys-D-Ala-D-Ala)-di-trans,octa-cis-undecaprenyl diphosphate = [GlcNAc-(1-&gt;4)-Mur2Ac(oyl-L-Ala-gamma-D-Glu-L-Lys-D-Ala-D-Ala)](n+1)-di-trans,octa-cis-undecaprenyl diphosphate + di-trans,octa-cis-undecaprenyl diphosphate + H(+). Its pathway is cell wall biogenesis; peptidoglycan biosynthesis. In terms of biological role, peptidoglycan polymerase that catalyzes glycan chain elongation from lipid-linked precursors. The chain is Biosynthetic peptidoglycan transglycosylase from Rhizobium leguminosarum bv. trifolii (strain WSM2304).